The following is a 549-amino-acid chain: uncharacterized protein (549 aa).

Helical transmembrane passes span 1-21 (MEIF…GVVT), 28-48 (IPLP…TFGL), 50-70 (VEFD…FADG), 85-105 (IFGL…FLIY), 106-126 (WVVP…LSPT), 165-185 (FAVA…TVEF), 187-207 (KVAI…GRSL), 222-242 (IVLL…IGVS), 278-298 (LEFV…PGIL), 310-330 (NVEI…LMLV), 361-381 (ILIA…VLSI), and 398-418 (VFLA…MLPI).

The protein belongs to the monovalent cation:proton antiporter 1 (CPA1) transporter (TC 2.A.36) family.

It localises to the cell inner membrane. This is an uncharacterized protein from Escherichia coli (strain K12).